A 377-amino-acid chain; its full sequence is Queuine tRNA-ribosyltransferase (377 aa).

D89 serves as the catalytic Proton acceptor. Substrate-binding positions include 89 to 93, D143, Q187, and G214; that span reads DSGGF. The RNA binding stretch occupies residues 245-251; the sequence is GVGKPED. The active-site Nucleophile is the D264. The segment at 269-273 is RNA binding; important for wobble base 34 recognition; it reads TRNAR. 4 residues coordinate Zn(2+): C302, C304, C307, and H333.

Belongs to the queuine tRNA-ribosyltransferase family. Homodimer. Within each dimer, one monomer is responsible for RNA recognition and catalysis, while the other monomer binds to the replacement base PreQ1. The cofactor is Zn(2+).

It catalyses the reaction 7-aminomethyl-7-carbaguanine + guanosine(34) in tRNA = 7-aminomethyl-7-carbaguanosine(34) in tRNA + guanine. The protein operates within tRNA modification; tRNA-queuosine biosynthesis. Functionally, catalyzes the base-exchange of a guanine (G) residue with the queuine precursor 7-aminomethyl-7-deazaguanine (PreQ1) at position 34 (anticodon wobble position) in tRNAs with GU(N) anticodons (tRNA-Asp, -Asn, -His and -Tyr). Catalysis occurs through a double-displacement mechanism. The nucleophile active site attacks the C1' of nucleotide 34 to detach the guanine base from the RNA, forming a covalent enzyme-RNA intermediate. The proton acceptor active site deprotonates the incoming PreQ1, allowing a nucleophilic attack on the C1' of the ribose to form the product. After dissociation, two additional enzymatic reactions on the tRNA convert PreQ1 to queuine (Q), resulting in the hypermodified nucleoside queuosine (7-(((4,5-cis-dihydroxy-2-cyclopenten-1-yl)amino)methyl)-7-deazaguanosine). The sequence is that of Queuine tRNA-ribosyltransferase from Shewanella piezotolerans (strain WP3 / JCM 13877).